The primary structure comprises 77 residues: Conotoxin Vc6c (77 aa).

Positions 1–22 (MKLTCMVIVAVLFLTANTFVTA) are cleaved as a signal peptide. Residues 23–51 (DDSGNGLENLFSKAHHEIKNPEASNLNKR) constitute a propeptide that is removed on maturation. 3 cysteine pairs are disulfide-bonded: cysteine 52–cysteine 67, cysteine 59–cysteine 71, and cysteine 66–cysteine 76.

In terms of tissue distribution, expressed by the venom duct.

It localises to the secreted. This chain is Conotoxin Vc6c, found in Conus victoriae (Queen Victoria cone).